Reading from the N-terminus, the 142-residue chain is Taurine up-regulated 1 protein (142 aa).

An N-terminal signal peptide occupies residues 1–40 (MARPPPLPGLVGRRSGRAVDRAIGWRLFLLLWHPALGAQA). The Extracellular portion of the chain corresponds to 41-123 (RPPRRAPGGR…ARTQLEGQEG (83 aa)). Residues 124–140 (AGGWLVVGFLLCLFLLM) form a helical membrane-spanning segment. Topologically, residues 141 to 142 (PP) are cytoplasmic.

Widely expressed in the adult with highest levels in placenta and testis. Also expressed in a number of embryonic tissues at multiple embryonic stages.

The protein localises to the nucleus membrane. It localises to the mitochondrion membrane. The protein resides in the cytoplasm. The polypeptide is Taurine up-regulated 1 protein (Mus musculus (Mouse)).